The chain runs to 772 residues: Endoplasmic reticulum membrane sensor NFE2L1 (772 aa).

Residues Tyr-7–Val-24 traverse the membrane as a helical; Signal-anchor for type II membrane protein segment. Residues Asp-108–Gly-148 are disordered. Over residues Val-113 to Gln-131 the composition is skewed to polar residues. A cholesterol recognition/amino acid consensus (CRAC) region region spans residues Val-191–Lys-199. Asn-348 carries an N-linked (GlcNAc...) asparagine glycan. Positions Ser-379–Glu-383 are CPD. Residues Asn-412 and Asn-423 are each glycosylated (N-linked (GlcNAc...) asparagine). A disordered region spans residues Glu-470–Thr-532. The short motif at Asp-476–Ser-480 is the Destruction motif element. A compositionally biased stretch (low complexity) spans Asp-476–Ala-523. Ser-528 is subject to Phosphoserine; by CK2. Phosphoserine; by PKA is present on Ser-599. The bZIP domain occupies Leu-654–Leu-717. Positions Arg-656–Lys-675 are basic motif. Residues Leu-682–Leu-696 are leucine-zipper. The disordered stretch occupies residues Arg-753–Lys-772. Residues Arg-761–Lys-768 carry the Nuclear localization signal motif. The span at Gln-763–Lys-772 shows a compositional bias: basic residues.

The protein belongs to the bZIP family. CNC subfamily. In terms of assembly, interacts with KEAP1. Interacts (via CPD region) with FBXW7; leading to its ubiquitination and degradation. Interacts with SYVN1/HRD1; leading to its ubiquitination and degradation. Interacts (when ubiquitinated) with DDI2; leading to its cleavage. As to quaternary structure, interacts (via the bZIP domain) with small MAF protein (MAFF, MAFG or MAFK); required for binding to antioxidant response elements (AREs) on DNA. Interacts (via Destruction motif) with BTRC; leading to its ubiquitination and degradation. Interacts with CEBPB; the heterodimer represses expression of DSPP during odontoblast differentiation. Interacts with MOTS-c, a peptide produced by the mitochondrially encoded 12S rRNA MT-RNR1. Cleaved at Leu-104 by the aspartyl protease DDI2 following retrotranslocation, releasing the protein from the endoplasmic reticulum membrane and forming the transcription factor NRF1 that translocates into the nucleus. Ubiquitination is prerequisite for cleavage by aspartyl protease DDI2. In terms of processing, N-glycosylated in normal conditions, when it has a single-pass type II membrane protein topology, with the DNA-binding domain facing the endoplasmic reticulum lumen. Deglycosylated during retrotranslocation to the cytosolic side of the membrane, to have a single-pass type III membrane protein topology with the major part of the protein facing the cytosol. Post-translationally, ubiquitinated by the SCF(FBXW7) complex and SYVN1/HRD1, leading to its degradation by the proteasome. Ubiquitinated during retrotranslocation to the cytosolic side of the membrane: ubiquitination does not lead to degradation and is required for processing by the aspartyl protease DDI2 and subsequent release from the endoplasmic reticulum membrane. Phosphorylation by CK2 at Ser-528 inhibits transcription factor activity, possibly by affecting DNA-binding activity. Phosphorylation at Ser-599 is required for interaction with CEBPB. In terms of processing, ubiquitinated by the SCF(BTRC) complex in the nucleus, leading to its degradation by the proteasome.

The protein resides in the endoplasmic reticulum membrane. Its subcellular location is the nucleus. In terms of biological role, endoplasmic reticulum membrane sensor that translocates into the nucleus in response to various stresses to act as a transcription factor. Constitutes a precursor of the transcription factor NRF1. Able to detect various cellular stresses, such as cholesterol excess, oxidative stress or proteasome inhibition. In response to stress, it is released from the endoplasmic reticulum membrane following cleavage by the protease DDI2 and translocates into the nucleus to form the transcription factor NRF1. Acts as a key sensor of cholesterol excess: in excess cholesterol conditions, the endoplasmic reticulum membrane form of the protein directly binds cholesterol via its CRAC motif, preventing cleavage and release of the transcription factor NRF1, thereby allowing expression of genes promoting cholesterol removal, such as CD36. Involved in proteasome homeostasis: in response to proteasome inhibition, it is released from the endoplasmic reticulum membrane, translocates to the nucleus and activates expression of genes encoding proteasome subunits. Functionally, CNC-type bZIP family transcription factor that translocates to the nucleus and regulates expression of target genes in response to various stresses. Heterodimerizes with small-Maf proteins (MAFF, MAFG or MAFK) and binds DNA motifs including the antioxidant response elements (AREs), which regulate expression of genes involved in oxidative stress response. Activates or represses expression of target genes, depending on the context. Plays a key role in cholesterol homeostasis by acting as a sensor of cholesterol excess: in low cholesterol conditions, translocates into the nucleus and represses expression of genes involved in defense against cholesterol excess, such as CD36. In excess cholesterol conditions, the endoplasmic reticulum membrane form of the protein directly binds cholesterol via its CRAC motif, preventing cleavage and release of the transcription factor NRF1, thereby allowing expression of genes promoting cholesterol removal. Critical for redox balance in response to oxidative stress: acts by binding the AREs motifs on promoters and mediating activation of oxidative stress response genes, such as GCLC, GCLM, GSS, MT1 and MT2. Plays an essential role during fetal liver hematopoiesis: probably has a protective function against oxidative stress and is involved in lipid homeostasis in the liver. Involved in proteasome homeostasis: in response to proteasome inhibition, mediates the 'bounce-back' of proteasome subunits by translocating into the nucleus and activating expression of genes encoding proteasome subunits. Also involved in regulating glucose flux. Together with CEBPB; represses expression of DSPP during odontoblast differentiation. In response to ascorbic acid induction, activates expression of SP7/Osterix in osteoblasts. In Pongo abelii (Sumatran orangutan), this protein is Endoplasmic reticulum membrane sensor NFE2L1.